Consider the following 320-residue polypeptide: tRNA U34 carboxymethyltransferase (320 aa).

Residues Lys-89, Trp-103, Lys-108, Gly-128, 150-152 (DPT), 179-180 (IE), Met-194, Tyr-198, and Arg-313 each bind carboxy-S-adenosyl-L-methionine.

The protein belongs to the class I-like SAM-binding methyltransferase superfamily. CmoB family. Homotetramer.

It carries out the reaction carboxy-S-adenosyl-L-methionine + 5-hydroxyuridine(34) in tRNA = 5-carboxymethoxyuridine(34) in tRNA + S-adenosyl-L-homocysteine + H(+). Catalyzes carboxymethyl transfer from carboxy-S-adenosyl-L-methionine (Cx-SAM) to 5-hydroxyuridine (ho5U) to form 5-carboxymethoxyuridine (cmo5U) at position 34 in tRNAs. This Glaesserella parasuis serovar 5 (strain SH0165) (Haemophilus parasuis) protein is tRNA U34 carboxymethyltransferase.